We begin with the raw amino-acid sequence, 204 residues long: Peroxynitrite isomerase (204 aa).

The short motif at 21-27 (GEWEGSG) is the GXWXGXG element. A heme b-binding site is contributed by His195.

This sequence belongs to the nitrobindin family. Homodimer. Heme b serves as cofactor.

It catalyses the reaction peroxynitrite = nitrate. It functions in the pathway nitrogen metabolism. In terms of biological role, heme-binding protein able to scavenge peroxynitrite and to protect free L-tyrosine against peroxynitrite-mediated nitration, by acting as a peroxynitrite isomerase that converts peroxynitrite to nitrate. Therefore, this protein likely plays a role in peroxynitrite sensing and in the detoxification of reactive nitrogen and oxygen species (RNS and ROS, respectively). Is able to bind nitric oxide (NO) in vitro, but may act as a sensor of peroxynitrite levels in vivo. This chain is Peroxynitrite isomerase, found in Arthrobacter sp. (strain FB24).